A 334-amino-acid chain; its full sequence is D-aspartate oxidase 1 (334 aa).

Residues aspartate 35, arginine 36, serine 43, glycine 307, and threonine 312 each contribute to the FAD site. Residues 332 to 334 carry the Microbody targeting signal motif; the sequence is SKL.

The protein belongs to the DAMOX/DASOX family. FAD is required as a cofactor. As to expression, expressed in the intestinal cells, hypodermis and in unidentified cells in the head in adult hermaphrodites.

It localises to the peroxisome matrix. The catalysed reaction is D-aspartate + O2 + H2O = oxaloacetate + H2O2 + NH4(+). It carries out the reaction D-glutamate + O2 + H2O = H2O2 + 2-oxoglutarate + NH4(+). Its activity is regulated as follows. Not inhibited by potassium bromide or thiolactomycin. Functionally, selectively catalyzes the oxidative deamination of acidic amino acids. May play a role in the egg-laying events and early development of the worm, in addition to quality control of the germ cells. The polypeptide is D-aspartate oxidase 1 (ddo-1) (Caenorhabditis elegans).